A 496-amino-acid chain; its full sequence is Probable cytosol aminopeptidase (496 aa).

Mn(2+) contacts are provided by Lys-266 and Asp-271. Lys-278 is a catalytic residue. Asp-289, Asp-348, and Glu-350 together coordinate Mn(2+). Residue Arg-352 is part of the active site.

It belongs to the peptidase M17 family. It depends on Mn(2+) as a cofactor.

The protein resides in the cytoplasm. It catalyses the reaction Release of an N-terminal amino acid, Xaa-|-Yaa-, in which Xaa is preferably Leu, but may be other amino acids including Pro although not Arg or Lys, and Yaa may be Pro. Amino acid amides and methyl esters are also readily hydrolyzed, but rates on arylamides are exceedingly low.. The catalysed reaction is Release of an N-terminal amino acid, preferentially leucine, but not glutamic or aspartic acids.. Presumably involved in the processing and regular turnover of intracellular proteins. Catalyzes the removal of unsubstituted N-terminal amino acids from various peptides. This is Probable cytosol aminopeptidase from Pseudomonas fluorescens (strain SBW25).